Reading from the N-terminus, the 260-residue chain is GDSL esterase/lipase WDL1 (260 aa).

A signal peptide spans 1 to 35 (MLGFAPAPGRPLFVLFGSSIVQFSFSNGGWGAALA). S18 (nucleophile) is an active-site residue. N-linked (GlcNAc...) asparagine glycans are attached at residues N83 and N150. Active-site residues include D191 and H194.

The protein belongs to the 'GDSL' lipolytic enzyme family. As to expression, highly expressed in panicles. Expressed in shoots, mature flowers and seeds.

It localises to the endoplasmic reticulum. Its function is as follows. Involved in the organization of leaf cuticle and wax crystals. The protein is GDSL esterase/lipase WDL1 of Oryza sativa subsp. japonica (Rice).